The primary structure comprises 376 residues: E3 ubiquitin-protein ligase RNF133 (376 aa).

The region spanning 65 to 167 (SSTLKRVAGV…LKGTEIFHLI (103 aa)) is the PA domain. Residues 190 to 210 (YLVSFVIVTTATLAYFIFYHI) form a helical membrane-spanning segment. The segment at 256–297 (CVICFEHYKPNDIVRILTCKHFFHKNCIDPWILSHGTCPICK) adopts an RING-type; atypical zinc-finger fold. The interval 328–376 (TLSPSEEETNNEVSPAGTSDKVIHVEENPTSQNNDSQPHSVVEDVHPSP) is disordered. The span at 355-366 (NPTSQNNDSQPH) shows a compositional bias: polar residues.

As to quaternary structure, interacts with E3 ligase UBE2J1. Auto-ubiquitinated.

It localises to the endoplasmic reticulum membrane. The enzyme catalyses S-ubiquitinyl-[E2 ubiquitin-conjugating enzyme]-L-cysteine + [acceptor protein]-L-lysine = [E2 ubiquitin-conjugating enzyme]-L-cysteine + N(6)-ubiquitinyl-[acceptor protein]-L-lysine.. It participates in protein modification; protein ubiquitination. Has E3 ubiquitin-protein ligase activity. Plays a role in male fecundity through the interaction with the E2 ubituitin-protein ligase UBE2J1. The polypeptide is E3 ubiquitin-protein ligase RNF133 (RNF133) (Macaca fascicularis (Crab-eating macaque)).